Reading from the N-terminus, the 133-residue chain is Gamma-crystallin 1 (133 aa).

Positions 1-41 (WMLYEHPNYTGHQYFLRRGEYPDFQQWMGLNDSIRSCRVIP) constitute a Beta/gamma crystallin 'Greek key' 2 domain. The segment at 42–46 (QHRGS) is connecting peptide. Beta/gamma crystallin 'Greek key' domains lie at 47–87 (FRLR…NVLE) and 88–130 (GHWI…RRVQ).

This sequence belongs to the beta/gamma-crystallin family. Monomer.

In terms of biological role, crystallins are the dominant structural components of the vertebrate eye lens. The chain is Gamma-crystallin 1 from Rana temporaria (European common frog).